The sequence spans 835 residues: Telomere length regulation protein TEL2 homolog (835 aa).

Disordered regions lie at residues 455-501 (SADC…LAPY) and 629-648 (LSHE…HSIR). Positions 464-473 (ESSPSKSCPK) are enriched in low complexity. Over residues 474–486 (AIEKSKMEAKADQ) the composition is skewed to basic and acidic residues. The segment covering 488 to 499 (SDSELDSDDDLA) has biased composition (acidic residues). Polar residues predominate over residues 636–648 (ESRSTGTGQHSIR).

It belongs to the TEL2 family.

It is found in the cytoplasm. Its subcellular location is the membrane. The protein resides in the nucleus. The protein localises to the chromosome. It localises to the telomere. In terms of biological role, regulator of the DNA damage response (DDR). Part of the TTT complex that is required to stabilize protein levels of the phosphatidylinositol 3-kinase-related protein kinase (PIKK) family proteins. Promotes assembly, stabilizes and maintains the activity of TORC complexes, which regulate cell growth and survival in response to nutrient and hormonal signals. May be involved in telomere length regulation. This Xenopus laevis (African clawed frog) protein is Telomere length regulation protein TEL2 homolog (telo2).